The sequence spans 173 residues: Ribosome maturation factor RimM (173 aa).

The PRC barrel domain occupies 92 to 165; the sequence is EGEFYHADLI…RVVIEMPGEI (74 aa).

It belongs to the RimM family. As to quaternary structure, binds ribosomal protein uS19.

Its subcellular location is the cytoplasm. An accessory protein needed during the final step in the assembly of 30S ribosomal subunit, possibly for assembly of the head region. Essential for efficient processing of 16S rRNA. May be needed both before and after RbfA during the maturation of 16S rRNA. It has affinity for free ribosomal 30S subunits but not for 70S ribosomes. This Nitrobacter hamburgensis (strain DSM 10229 / NCIMB 13809 / X14) protein is Ribosome maturation factor RimM.